A 197-amino-acid polypeptide reads, in one-letter code: Large ribosomal subunit protein bL25 (197 aa).

Belongs to the bacterial ribosomal protein bL25 family. CTC subfamily. Part of the 50S ribosomal subunit; part of the 5S rRNA/L5/L18/L25 subcomplex. Contacts the 5S rRNA. Binds to the 5S rRNA independently of L5 and L18.

Its function is as follows. This is one of the proteins that binds to the 5S RNA in the ribosome where it forms part of the central protuberance. This chain is Large ribosomal subunit protein bL25, found in Caulobacter vibrioides (strain ATCC 19089 / CIP 103742 / CB 15) (Caulobacter crescentus).